A 91-amino-acid polypeptide reads, in one-letter code: Probable Fe(2+)-trafficking protein (91 aa).

This sequence belongs to the Fe(2+)-trafficking protein family. As to quaternary structure, monomer.

Could be a mediator in iron transactions between iron acquisition and iron-requiring processes, such as synthesis and/or repair of Fe-S clusters in biosynthetic enzymes. This Cronobacter sakazakii (strain ATCC BAA-894) (Enterobacter sakazakii) protein is Probable Fe(2+)-trafficking protein.